A 399-amino-acid chain; its full sequence is Elongation factor Tu (399 aa).

The tr-type G domain occupies 10–207 (KPHVNVGTIG…ALDSYIPEPV (198 aa)). Residues 19 to 26 (GHIDHGKT) form a G1 region. A GTP-binding site is contributed by 19–26 (GHIDHGKT). Thr26 lines the Mg(2+) pocket. The segment at 60–64 (GITIN) is G2. Residues 81 to 84 (DCPG) are G3. Residues 81 to 85 (DCPGH) and 136 to 139 (NKVD) contribute to the GTP site. The segment at 136 to 139 (NKVD) is G4. The G5 stretch occupies residues 174–176 (SAL).

This sequence belongs to the TRAFAC class translation factor GTPase superfamily. Classic translation factor GTPase family. EF-Tu/EF-1A subfamily. As to quaternary structure, monomer.

The protein resides in the cytoplasm. It carries out the reaction GTP + H2O = GDP + phosphate + H(+). Its function is as follows. GTP hydrolase that promotes the GTP-dependent binding of aminoacyl-tRNA to the A-site of ribosomes during protein biosynthesis. The chain is Elongation factor Tu from Pseudothermotoga lettingae (strain ATCC BAA-301 / DSM 14385 / NBRC 107922 / TMO) (Thermotoga lettingae).